Reading from the N-terminus, the 438-residue chain is MDYQTIPSQGLSGEICVPGDKSISHRAVLLVAIAEGQTQVDGFLMGADNLAMVSALQQMGASIQVIEDENILVVEGVGMTGLQAPPEALDCGNSGTAIRLLSGLLAGQPFNTVLTGDSSLQRRPMKRIIDPLTLMGAKIDSTGNVPPLKIYGNPRLTGIHYQLPMASAQVKSCLLLAGLYARGKTCITEPAPSRDHTERLLKHFHYTLQKDKQSICVSGGGKLKANDISIPGDISSAAFFIVAATITPGSAIRLCRVGVNPTRLGVINLLKMMGADIEVTHYTEKNEEPTADITVRHARLKGIDIPPDQVLLTIDEFPVLLIAAAVAQGKTVLRDAAELRVKETDRIAAMVDGLQKLGIAAESLPDGVIIQGGTLEGGEVNSYDDHRIAMAFAVAGTLAKGPVRIRNCDNVKTSFPNFVELANEVGMNVKGVRGRGGF.

Lys-21, Ser-22, and Arg-26 together coordinate 3-phosphoshikimate. Lys-21 serves as a coordination point for phosphoenolpyruvate. Positions 95 and 123 each coordinate phosphoenolpyruvate. Residues Ser-167, Gln-169, Asp-315, and Lys-342 each coordinate 3-phosphoshikimate. Gln-169 provides a ligand contact to phosphoenolpyruvate. Asp-315 acts as the Proton acceptor in catalysis. Phosphoenolpyruvate contacts are provided by Arg-346 and Arg-387.

Belongs to the EPSP synthase family. In terms of assembly, monomer.

Its subcellular location is the cytoplasm. The enzyme catalyses 3-phosphoshikimate + phosphoenolpyruvate = 5-O-(1-carboxyvinyl)-3-phosphoshikimate + phosphate. The protein operates within metabolic intermediate biosynthesis; chorismate biosynthesis; chorismate from D-erythrose 4-phosphate and phosphoenolpyruvate: step 6/7. Functionally, catalyzes the transfer of the enolpyruvyl moiety of phosphoenolpyruvate (PEP) to the 5-hydroxyl of shikimate-3-phosphate (S3P) to produce enolpyruvyl shikimate-3-phosphate and inorganic phosphate. The chain is 3-phosphoshikimate 1-carboxyvinyltransferase from Coxiella burnetii (strain RSA 331 / Henzerling II).